A 179-amino-acid chain; its full sequence is Ribosome maturation factor RimM (179 aa).

In terms of domain architecture, PRC barrel spans 103 to 176; sequence EPDTYYDHQL…IVEIDPPKGL (74 aa).

Belongs to the RimM family. In terms of assembly, binds ribosomal protein uS19.

It localises to the cytoplasm. Functionally, an accessory protein needed during the final step in the assembly of 30S ribosomal subunit, possibly for assembly of the head region. Essential for efficient processing of 16S rRNA. May be needed both before and after RbfA during the maturation of 16S rRNA. It has affinity for free ribosomal 30S subunits but not for 70S ribosomes. The protein is Ribosome maturation factor RimM of Mycobacterium leprae (strain Br4923).